A 460-amino-acid chain; its full sequence is 4-O-methyl-glucuronoyl methylesterase (460 aa).

A signal peptide spans 1–17 (MASRFFALLLLAIPIQA). Gln18 is modified (pyrrolidone carboxylic acid). The region spanning 18–53 (QSPVWGQCGGIGWSGPTTCVGGATCVSYNPYYSQCI) is the CBM1 domain. 3 cysteine pairs are disulfide-bonded: Cys96/Cys131, Cys277/Cys412, and Cys309/Cys384. Positions 276–281 (GCSRNG) match the GXSYXG catalytic site motif motif. Catalysis depends on Ser278, which acts as the Nucleophile. Residues Lys282, Gln324, Glu332, and Trp375 each contribute to the substrate site. His411 functions as the Proton donor/acceptor in the catalytic mechanism. An N-linked (GlcNAc...) asparagine glycan is attached at Asn447.

The protein belongs to the carbohydrate esterase 15 (CE15) family.

Its subcellular location is the secreted. It carries out the reaction a 4-O-methyl-alpha-D-glucuronosyl ester derivative + H2O = 4-O-methyl-alpha-D-glucuronate derivative + an alcohol + H(+). In terms of biological role, glucuronoyl esterase which may play a significant role in biomass degradation, as it is considered to disconnect hemicellulose from lignin through the hydrolysis of the ester bond between 4-O-methyl-D-glucuronic acid residues of glucuronoxylans and aromatic alcohols of lignin. Does not hydrolyze substrates of other carbohydrate esterases such as acetylxylan esterase, acetyl esterase and feruloyl esterase. The protein is 4-O-methyl-glucuronoyl methylesterase of Hypocrea jecorina (strain QM6a) (Trichoderma reesei).